The following is a 133-amino-acid chain: ATP synthase epsilon chain (133 aa).

Belongs to the ATPase epsilon chain family. F-type ATPases have 2 components, CF(1) - the catalytic core - and CF(0) - the membrane proton channel. CF(1) has five subunits: alpha(3), beta(3), gamma(1), delta(1), epsilon(1). CF(0) has three main subunits: a, b and c.

The protein resides in the cell inner membrane. Produces ATP from ADP in the presence of a proton gradient across the membrane. The protein is ATP synthase epsilon chain of Maricaulis maris (strain MCS10) (Caulobacter maris).